The sequence spans 136 residues: Large ribosomal subunit protein uL16 (136 aa).

Belongs to the universal ribosomal protein uL16 family. In terms of assembly, part of the 50S ribosomal subunit.

Binds 23S rRNA and is also seen to make contacts with the A and possibly P site tRNAs. This chain is Large ribosomal subunit protein uL16, found in Orientia tsutsugamushi (strain Boryong) (Rickettsia tsutsugamushi).